The sequence spans 349 residues: Flap endonuclease 1 (349 aa).

Residues 1–98 form an N-domain region; that stretch reads MDLGEIVEDV…EEIERRKRAK (98 aa). The Mg(2+) site is built by Asp-27, Asp-80, Glu-152, Glu-154, Asp-173, Asp-175, and Asp-236. The tract at residues 116-258 is I-domain; it reads EIRKYAQAAV…TALRIIKKYN (143 aa). An interaction with PCNA region spans residues 341-349; the sequence is KQTGLDQWF.

It belongs to the XPG/RAD2 endonuclease family. FEN1 subfamily. In terms of assembly, interacts with PCNA. PCNA stimulates the nuclease activity without altering cleavage specificity. The cofactor is Mg(2+).

Its function is as follows. Structure-specific nuclease with 5'-flap endonuclease and 5'-3' exonuclease activities involved in DNA replication and repair. During DNA replication, cleaves the 5'-overhanging flap structure that is generated by displacement synthesis when DNA polymerase encounters the 5'-end of a downstream Okazaki fragment. Binds the unpaired 3'-DNA end and kinks the DNA to facilitate 5' cleavage specificity. Cleaves one nucleotide into the double-stranded DNA from the junction in flap DNA, leaving a nick for ligation. Also involved in the base excision repair (BER) pathway. Acts as a genome stabilization factor that prevents flaps from equilibrating into structures that lead to duplications and deletions. Also possesses 5'-3' exonuclease activity on nicked or gapped double-stranded DNA. The protein is Flap endonuclease 1 of Sulfolobus acidocaldarius (strain ATCC 33909 / DSM 639 / JCM 8929 / NBRC 15157 / NCIMB 11770).